A 208-amino-acid chain; its full sequence is N-(5'-phosphoribosyl)anthranilate isomerase (208 aa).

Belongs to the TrpF family.

The enzyme catalyses N-(5-phospho-beta-D-ribosyl)anthranilate = 1-(2-carboxyphenylamino)-1-deoxy-D-ribulose 5-phosphate. It participates in amino-acid biosynthesis; L-tryptophan biosynthesis; L-tryptophan from chorismate: step 3/5. This is N-(5'-phosphoribosyl)anthranilate isomerase from Natronomonas pharaonis (strain ATCC 35678 / DSM 2160 / CIP 103997 / JCM 8858 / NBRC 14720 / NCIMB 2260 / Gabara) (Halobacterium pharaonis).